We begin with the raw amino-acid sequence, 669 residues long: DNA mismatch repair protein MutL (669 aa).

Residues 357-379 form a disordered region; that stretch reads EQRQNTENNQEKTFSSEESNSKS. A compositionally biased stretch (polar residues) spans 361-379; sequence NTENNQEKTFSSEESNSKS.

This sequence belongs to the DNA mismatch repair MutL/HexB family.

This protein is involved in the repair of mismatches in DNA. It is required for dam-dependent methyl-directed DNA mismatch repair. May act as a 'molecular matchmaker', a protein that promotes the formation of a stable complex between two or more DNA-binding proteins in an ATP-dependent manner without itself being part of a final effector complex. This is DNA mismatch repair protein MutL from Staphylococcus aureus (strain Mu3 / ATCC 700698).